A 270-amino-acid chain; its full sequence is UPF0162 protein PA3419 (270 aa).

This sequence belongs to the UPF0162 family.

The sequence is that of UPF0162 protein PA3419 from Pseudomonas aeruginosa (strain ATCC 15692 / DSM 22644 / CIP 104116 / JCM 14847 / LMG 12228 / 1C / PRS 101 / PAO1).